The chain runs to 199 residues: Large ribosomal subunit protein bL25 (199 aa).

This sequence belongs to the bacterial ribosomal protein bL25 family. CTC subfamily. In terms of assembly, part of the 50S ribosomal subunit; part of the 5S rRNA/L5/L18/L25 subcomplex. Contacts the 5S rRNA. Binds to the 5S rRNA independently of L5 and L18.

In terms of biological role, this is one of the proteins that binds to the 5S RNA in the ribosome where it forms part of the central protuberance. The polypeptide is Large ribosomal subunit protein bL25 (Syntrophobacter fumaroxidans (strain DSM 10017 / MPOB)).